The following is a 481-amino-acid chain: Glutamate--tRNA ligase (481 aa).

The 'HIGH' region motif lies at 9–19 (PSPTGNLHIGT). Positions 98, 100, 125, and 127 each coordinate Zn(2+). The 'KMSKS' region signature appears at 248-252 (KLSKR). An ATP-binding site is contributed by lysine 251.

It belongs to the class-I aminoacyl-tRNA synthetase family. Glutamate--tRNA ligase type 1 subfamily. Monomer. Zn(2+) serves as cofactor.

The protein resides in the cytoplasm. The catalysed reaction is tRNA(Glu) + L-glutamate + ATP = L-glutamyl-tRNA(Glu) + AMP + diphosphate. Catalyzes the attachment of glutamate to tRNA(Glu) in a two-step reaction: glutamate is first activated by ATP to form Glu-AMP and then transferred to the acceptor end of tRNA(Glu). The polypeptide is Glutamate--tRNA ligase (Synechococcus elongatus (strain ATCC 33912 / PCC 7942 / FACHB-805) (Anacystis nidulans R2)).